The primary structure comprises 550 residues: Solute carrier family 22 member 11 (550 aa).

Over 1–10 the chain is Cytoplasmic; it reads MAFSKLLEQA. A helical membrane pass occupies residues 11–31; the sequence is GGVGLFQTLQVLTFILPCLMI. Residues 32–142 lie on the Extracellular side of the membrane; it reads PSQMLLENFS…DLVCSSQGLK (111 aa). Asparagine 39, asparagine 56, and asparagine 99 each carry an N-linked (GlcNAc...) asparagine glycan. The helical transmembrane segment at 143–163 threads the bilayer; it reads PLSQSIFMSGILVGSFIWGLL. The Cytoplasmic portion of the chain corresponds to 164–174; it reads SYRFGRKPMLS. A helical membrane pass occupies residues 175-195; it reads WCCLQLAVAGTSTIFAPTFVI. Over 196–200 the chain is Extracellular; that stretch reads YCGLR. Residues 201-221 traverse the membrane as a helical segment; that stretch reads FVAAFGMAGIFLSSLTLMVEW. Residues 222–231 are Cytoplasmic-facing; it reads TTTSRRAVTM. The helical transmembrane segment at 232-252 threads the bilayer; sequence TVVGCAFSAGQAALGGLAFAL. At 253–256 the chain is on the extracellular side; sequence RDWR. A helical membrane pass occupies residues 257–277; the sequence is TLQLAASVPFFAISLISWWLP. At 278 to 346 the chain is on the cytoplasmic side; that stretch reads ESARWLIIKG…FCVPVLRWRS (69 aa). Residues 347-367 traverse the membrane as a helical segment; that stretch reads CAMLVVNFSLLISYYGLVFDL. Residues 368 to 378 lie on the Extracellular side of the membrane; it reads QSLGRDIFLLQ. The chain crosses the membrane as a helical span at residues 379–399; it reads ALFGAVDFLGRATTALLLSFL. Residues 400 to 402 are Cytoplasmic-facing; that stretch reads GRR. A helical transmembrane segment spans residues 403-423; sequence TIQAGSQAMAGLAILANMLVP. The Extracellular segment spans residues 424–430; sequence QDLQTLR. Residues 431–451 form a helical membrane-spanning segment; it reads VVFAVLGKGCFGISLTCLTIY. Residues 452–463 lie on the Cytoplasmic side of the membrane; that stretch reads KAELFPTPVRMT. Residues 464-484 form a helical membrane-spanning segment; that stretch reads ADGILHTVGRLGAMMGPLILM. The Extracellular segment spans residues 485–490; sequence SRQALP. Residues 491–511 form a helical membrane-spanning segment; that stretch reads LLPPLLYGVISIASSLVVLFF. Topologically, residues 512-550 are cytoplasmic; sequence LPETQGLPLPDTIQDLESQKSTAAQGNRQEAVTVESTSL. A disordered region spans residues 531-550; that stretch reads KSTAAQGNRQEAVTVESTSL.

This sequence belongs to the major facilitator (TC 2.A.1) superfamily. Organic cation transporter (TC 2.A.1.19) family. N-glycosylated. Contains several complex-type N-glycans. Expressed in placental trophoblasts, syncytiotrophoblast and cytotrophoblast. Also located in the proximal tubules in kidneys.

It is found in the cell membrane. Its subcellular location is the apical cell membrane. The protein resides in the basal cell membrane. It catalyses the reaction estrone 3-sulfate(out) + glutarate(in) = estrone 3-sulfate(in) + glutarate(out). The catalysed reaction is dehydroepiandrosterone 3-sulfate(out) = dehydroepiandrosterone 3-sulfate(in). It carries out the reaction prostaglandin F2alpha(out) = prostaglandin F2alpha(in). The enzyme catalyses prostaglandin E2(out) = prostaglandin E2(in). Its function is as follows. Antiporter that mediates the transport of conjugated steroids and other specific organic anions at the basal membrane of syncytiotrophoblast and at the apical membrane of proximal tubule epithelial cells, in exchange for anionic compounds. May be responsible for placental absorption of fetal-derived steroid sulfates such as estrone sulfate (E1S) and the steroid hormone precursor dehydroepiandrosterone sulfate (DHEA-S), as well as clearing waste products and xenobiotics from the fetus. Maybe also be involved in placental urate homeostasis. Facilitates the renal reabsorption of organic anions such as urate and derived steroid sulfates. Organic anion glutarate acts as conteranion for E1S renal uptake. Possible transport mode may also include DHEA-S/E1S exchange. Also interacts with inorganic anions such as chloride and hydroxyl ions, therefore possible transport modes may include E1S/Cl(-), E1S/OH(-), urate/Cl(-) and urate/OH(-). Also mediates the transport of prostaglandin E2 (PGE2) and prostaglandin F2-alpha (PGF2-alpha) and may be involved in their renal excretion. Also able to uptake anionic drugs, diuretics, bile salts and ochratoxin A. Mediates the unidirectional efflux of glutamate and aspartate. Glutamate efflux down its transmembrane gradient may drive SLC22A11/OAT4-mediated placental uptake of E1S. In Homo sapiens (Human), this protein is Solute carrier family 22 member 11.